The sequence spans 440 residues: Chromosomal replication initiator protein DnaA (440 aa).

The segment at 1–93 is domain I, interacts with DnaA modulators; it reads MNVQLNEIWN…QTPVKPVAQE (93 aa). Residues 94–101 are domain II; that stretch reads YTEDSNMS. A domain III, AAA+ region region spans residues 102-318; it reads FLNPKYTFDT…GALNRVIAYS (217 aa). The ATP site is built by glycine 146, glycine 148, lysine 149, and threonine 150. A domain IV, binds dsDNA region spans residues 319 to 440; that stretch reads TLTENIINVD…EEIKKNITGG (122 aa).

Belongs to the DnaA family. Oligomerizes as a right-handed, spiral filament on DNA at oriC.

The protein resides in the cytoplasm. Plays an essential role in the initiation and regulation of chromosomal replication. ATP-DnaA binds to the origin of replication (oriC) to initiate formation of the DNA replication initiation complex once per cell cycle. Binds the DnaA box (a 9 base pair repeat at the origin) and separates the double-stranded (ds)DNA. Forms a right-handed helical filament on oriC DNA; dsDNA binds to the exterior of the filament while single-stranded (ss)DNA is stabiized in the filament's interior. The ATP-DnaA-oriC complex binds and stabilizes one strand of the AT-rich DNA unwinding element (DUE), permitting loading of DNA polymerase. After initiation quickly degrades to an ADP-DnaA complex that is not apt for DNA replication. Binds acidic phospholipids. The polypeptide is Chromosomal replication initiator protein DnaA (Ruminiclostridium cellulolyticum (strain ATCC 35319 / DSM 5812 / JCM 6584 / H10) (Clostridium cellulolyticum)).